The chain runs to 309 residues: Zinc transporter ZIPB (309 aa).

Residues 1-22 (MNQPSSLAADLRGAWHAQAQSH) lie on the Periplasmic side of the membrane. A helical membrane pass occupies residues 23 to 50 (PLITLGLAASAAGVVLLLVAGIVNALTG). Residues 51 to 55 (ENRVH) lie on the Extracellular side of the membrane. The chain crosses the membrane as a helical span at residues 56–81 (VGYAVLGGAAGFAATALGALMALGLR). Over 82–83 (AI) the chain is Periplasmic. A helical transmembrane segment spans residues 84–119 (SARTQDAMLGFAAGMMLAASAFSLILPGLDAAGTIV). D89 serves as a coordination point for Zn(2+). Residue M99 coordinates Cd(2+). At 120 to 121 (GP) the chain is on the extracellular side. The chain crosses the membrane as a helical span at residues 122 to 145 (GPAAAAVVALGLGLGVLLMLGLDY). D144 is a binding site for Zn(2+). Position 144 (D144) interacts with Cd(2+). Topologically, residues 146-165 (FTPHEHERTGHQGPEAARVN) are periplasmic. A helical transmembrane segment spans residues 166–190 (RVWLFVLTIILHNLPEGMAIGVSFA). A Zn(2+)-binding site is contributed by H177. Residues H177, N178, and E181 each contribute to the Cd(2+) site. Residue E181 coordinates Zn(2+). The Extracellular segment spans residues 191-192 (TG). The chain crosses the membrane as a helical span at residues 193–222 (DLRIGLPLTSAIAIQDVPEGLAVALALRAV). Position 207 (Q207) interacts with Zn(2+). The Cd(2+) site is built by Q207, D208, and E211. Zn(2+) is bound at residue E211. The Periplasmic portion of the chain corresponds to 223–224 (GL). Residues 225-251 (PIGRAVLVAVASGLMEPLGALVGVGIS) traverse the membrane as a helical segment. E240 is a Cd(2+) binding site. Residues 252–255 (SGFA) lie on the Extracellular side of the membrane. The helical transmembrane segment at 256 to 275 (LAYPISMGLAAGAMIFVVSH) threads the bilayer. Zn(2+) is bound by residues H275, E276, and H286. H275 contacts Cd(2+). The Periplasmic segment spans residues 276–287 (EVIPETHRNGHE). Residues 288–308 (TTATVGLMAGFALMMFLDTAL) form a helical membrane-spanning segment. Position 309 (G309) is a topological domain, extracellular.

The protein belongs to the ZIP transporter (TC 2.A.5) family. As to quaternary structure, homodimer. Also exists as a monomer.

Its subcellular location is the cell inner membrane. It catalyses the reaction Zn(2+)(in) = Zn(2+)(out). It carries out the reaction Cd(2+)(in) = Cd(2+)(out). Functionally, selective electrodiffusional channel that mediates the uptake of Zn(2+). Exploits in vivo zinc concentration gradients (maintained by cellular zinc homeostasis) to passively move zinc ions into the cytoplasm. ZIPB-mediated zinc flux is dependent upon pH, but independent of the proton motive force. Is also able to import Cd(2+), but is not permeable to Co(2+), Cu(2+), Fe(2+), Mn(2+) and Ni(2+). This Bordetella bronchiseptica (strain ATCC BAA-588 / NCTC 13252 / RB50) (Alcaligenes bronchisepticus) protein is Zinc transporter ZIPB.